A 156-amino-acid polypeptide reads, in one-letter code: Small ribosomal subunit protein uS7 (156 aa).

It belongs to the universal ribosomal protein uS7 family. As to quaternary structure, part of the 30S ribosomal subunit. Contacts proteins S9 and S11.

Its function is as follows. One of the primary rRNA binding proteins, it binds directly to 16S rRNA where it nucleates assembly of the head domain of the 30S subunit. Is located at the subunit interface close to the decoding center, probably blocks exit of the E-site tRNA. This is Small ribosomal subunit protein uS7 from Vibrio cholerae serotype O1 (strain ATCC 39315 / El Tor Inaba N16961).